The chain runs to 311 residues: Ribosomal RNA small subunit methyltransferase H (311 aa).

Residues 39-41 (GGH), Asp59, Phe81, Asp102, and His109 each bind S-adenosyl-L-methionine.

Belongs to the methyltransferase superfamily. RsmH family.

It is found in the cytoplasm. It catalyses the reaction cytidine(1402) in 16S rRNA + S-adenosyl-L-methionine = N(4)-methylcytidine(1402) in 16S rRNA + S-adenosyl-L-homocysteine + H(+). Its function is as follows. Specifically methylates the N4 position of cytidine in position 1402 (C1402) of 16S rRNA. The sequence is that of Ribosomal RNA small subunit methyltransferase H from Porphyromonas gingivalis (strain ATCC BAA-308 / W83).